A 446-amino-acid chain; its full sequence is Ribosomal protein uS12 methylthiotransferase RimO (446 aa).

The MTTase N-terminal domain occupies 4 to 119 (YKVGMVSLGC…IDKVIKEFIE (116 aa)). The [4Fe-4S] cluster site is built by Cys-13, Cys-48, Cys-82, Cys-157, Cys-161, and Cys-164. The region spanning 143-373 (TTQKESAYIR…MLSQEKISND (231 aa)) is the Radical SAM core domain. A TRAM domain is found at 376–442 (KLKVNKKYDI…DYDLIGVVED (67 aa)).

Belongs to the methylthiotransferase family. RimO subfamily. [4Fe-4S] cluster is required as a cofactor.

It localises to the cytoplasm. The catalysed reaction is L-aspartate(89)-[ribosomal protein uS12]-hydrogen + (sulfur carrier)-SH + AH2 + 2 S-adenosyl-L-methionine = 3-methylsulfanyl-L-aspartate(89)-[ribosomal protein uS12]-hydrogen + (sulfur carrier)-H + 5'-deoxyadenosine + L-methionine + A + S-adenosyl-L-homocysteine + 2 H(+). Its function is as follows. Catalyzes the methylthiolation of an aspartic acid residue of ribosomal protein uS12. The polypeptide is Ribosomal protein uS12 methylthiotransferase RimO (Clostridium botulinum (strain Eklund 17B / Type B)).